The primary structure comprises 195 residues: Cytochrome c oxidase assembly protein CtaG (195 aa).

Over 1 to 9 (MALNGPQKT) the chain is Cytoplasmic. A helical; Signal-anchor for type II membrane protein membrane pass occupies residues 10-30 (VVQLVGVVVLMGGLAWASVPF). The Periplasmic portion of the chain corresponds to 31-195 (YDWFCRVTGF…DTSGAETELN (165 aa)).

It belongs to the COX11/CtaG family.

The protein resides in the cell inner membrane. Exerts its effect at some terminal stage of cytochrome c oxidase synthesis, probably by being involved in the insertion of the copper B into subunit I. The chain is Cytochrome c oxidase assembly protein CtaG from Ruegeria sp. (strain TM1040) (Silicibacter sp.).